The sequence spans 143 residues: MFPKIKQTSKNYNGKEIQAISMRFSNQITILVTISGKIGQMYMMTYEKSVMSPVSITGDMSTLPEIGVRTLLGGGGEDDIKSHWAQITAGQVGSLLARQQMLVRPDVRIPRVCLGLHVPWTDDNEKNGDLTVVILELVKEICF.

It is found in the cytoplasm. The protein resides in the nucleus. This is an uncharacterized protein from Schizosaccharomyces pombe (strain 972 / ATCC 24843) (Fission yeast).